The following is a 298-amino-acid chain: MTAPLIVICGATATGKSGLALKLAEKLDAVILSADSRQIYKEFDIGTAKPTPAEQQSIPHYLIDICEPTETLTLAEYQAQAQALIAQFHAEQKPVLLVGGTGLYIKAITKGLKIPRVAPQPDLRQQFTDLGQAYSYQLLRQVDPEVCQKIHPNDQVRTLRALEVFYVTGEPISSQQGENSPTYSILEIGLDCAPDHLDQRIRQRTQQMVDQGFVAEVERLGKKYGWDLPLLNTLGYAEFRDYVRGQGTLEEAIANTVLHTRQFAKRQRTWFRANPDIHWLDNTAPDLLEQALNLITQQ.

Residue 10 to 17 (GATATGKS) participates in ATP binding. Residue 12 to 17 (TATGKS) participates in substrate binding. The interaction with substrate tRNA stretch occupies residues 35–38 (DSRQ).

This sequence belongs to the IPP transferase family. As to quaternary structure, monomer. Mg(2+) is required as a cofactor.

It carries out the reaction adenosine(37) in tRNA + dimethylallyl diphosphate = N(6)-dimethylallyladenosine(37) in tRNA + diphosphate. Catalyzes the transfer of a dimethylallyl group onto the adenine at position 37 in tRNAs that read codons beginning with uridine, leading to the formation of N6-(dimethylallyl)adenosine (i(6)A). In Picosynechococcus sp. (strain ATCC 27264 / PCC 7002 / PR-6) (Agmenellum quadruplicatum), this protein is tRNA dimethylallyltransferase.